We begin with the raw amino-acid sequence, 299 residues long: Oxygen-dependent coproporphyrinogen-III oxidase (299 aa).

Ser92 is a substrate binding site. Mn(2+) contacts are provided by His96 and His106. His106 serves as the catalytic Proton donor. 108–110 (NVR) is a binding site for substrate. Mn(2+) contacts are provided by His145 and His175. The interval 240-275 (YVEFNLVWDRGTLFGLQTGGRTESILMSMPPLVRWE) is important for dimerization. Residue 258 to 260 (GGR) coordinates substrate.

The protein belongs to the aerobic coproporphyrinogen-III oxidase family. Homodimer. Mn(2+) serves as cofactor.

It is found in the cytoplasm. It carries out the reaction coproporphyrinogen III + O2 + 2 H(+) = protoporphyrinogen IX + 2 CO2 + 2 H2O. Its pathway is porphyrin-containing compound metabolism; protoporphyrin-IX biosynthesis; protoporphyrinogen-IX from coproporphyrinogen-III (O2 route): step 1/1. In terms of biological role, involved in the heme biosynthesis. Catalyzes the aerobic oxidative decarboxylation of propionate groups of rings A and B of coproporphyrinogen-III to yield the vinyl groups in protoporphyrinogen-IX. This Escherichia coli O8 (strain IAI1) protein is Oxygen-dependent coproporphyrinogen-III oxidase.